The following is a 239-amino-acid chain: Uridylate kinase (239 aa).

Lys-13–Gly-16 contributes to the ATP binding site. Gly-55 is a binding site for UMP. Residues Gly-56 and Arg-60 each contribute to the ATP site. Residues Asp-75 and Leu-136–Thr-143 contribute to the UMP site. Residues Thr-163, Tyr-169, and Asp-172 each coordinate ATP.

This sequence belongs to the UMP kinase family. In terms of assembly, homohexamer.

It is found in the cytoplasm. It carries out the reaction UMP + ATP = UDP + ADP. Its pathway is pyrimidine metabolism; CTP biosynthesis via de novo pathway; UDP from UMP (UMPK route): step 1/1. With respect to regulation, inhibited by UTP. Functionally, catalyzes the reversible phosphorylation of UMP to UDP. The polypeptide is Uridylate kinase (Buchnera aphidicola subsp. Cinara cedri (strain Cc)).